The sequence spans 356 residues: MQTLHALFRDIPAPDAEAMARAQQHIDGLLKPPGSLGRLETLAVQLAGMPGLNGTPQVGEKAVLVMCADHGVWDEGVAVSPKIVTAIQAANMTQGTTGVCVLAAQAGAKVHVIDVGIDAEPIPGVVDMRVARGCGNIAVGPAMSRSQAEALLLEVSRYTCDLAKRGVTLFGVGELGMANTTPAAAMVSVFTGSDAKEVVGIGANLPPSRIDNKVDVVRRAIAINQPNPRDGIDVLSKVGGFDLVGMTGVMLGAARCGLPVLLDGFLSYSAALAACQIAPAVRPYLIPSHFSAEKGARIALAHLSMEPYLHMAMRLGEGSGAALAMPIVEAACAMFHNMGELAASNIVLPEGNANAT.

Catalysis depends on Glu317, which acts as the Proton acceptor.

Belongs to the CobT family. Homodimer.

The enzyme catalyses 5,6-dimethylbenzimidazole + nicotinate beta-D-ribonucleotide = alpha-ribazole 5'-phosphate + nicotinate + H(+). Its pathway is nucleoside biosynthesis; alpha-ribazole biosynthesis; alpha-ribazole from 5,6-dimethylbenzimidazole: step 1/2. Functionally, catalyzes the synthesis of alpha-ribazole-5'-phosphate from nicotinate mononucleotide (NAMN) and 5,6-dimethylbenzimidazole (DMB). This Salmonella typhi protein is Nicotinate-nucleotide--dimethylbenzimidazole phosphoribosyltransferase.